A 158-amino-acid chain; its full sequence is Ribosome maturation factor RimP (158 aa).

The protein belongs to the RimP family.

The protein resides in the cytoplasm. Its function is as follows. Required for maturation of 30S ribosomal subunits. This Streptococcus suis (strain 05ZYH33) protein is Ribosome maturation factor RimP.